A 119-amino-acid chain; its full sequence is Large ribosomal subunit protein uL18 (119 aa).

This sequence belongs to the universal ribosomal protein uL18 family. Part of the 50S ribosomal subunit; part of the 5S rRNA/L5/L18/L25 subcomplex. Contacts the 5S and 23S rRNAs.

This is one of the proteins that bind and probably mediate the attachment of the 5S RNA into the large ribosomal subunit, where it forms part of the central protuberance. In Nitratidesulfovibrio vulgaris (strain DSM 19637 / Miyazaki F) (Desulfovibrio vulgaris), this protein is Large ribosomal subunit protein uL18.